The sequence spans 383 residues: Queuine tRNA-ribosyltransferase (383 aa).

Asp-95 (proton acceptor) is an active-site residue. Substrate-binding positions include 95–99 (DSGGF), Asp-149, Gln-195, and Gly-222. Residues 253–259 (GVGSPDS) form an RNA binding region. The active-site Nucleophile is Asp-272. Positions 277–281 (TRIAR) are RNA binding; important for wobble base 34 recognition. Zn(2+)-binding residues include Cys-310, Cys-312, Cys-315, and His-341.

Belongs to the queuine tRNA-ribosyltransferase family. As to quaternary structure, homodimer. Within each dimer, one monomer is responsible for RNA recognition and catalysis, while the other monomer binds to the replacement base PreQ1. It depends on Zn(2+) as a cofactor.

It carries out the reaction 7-aminomethyl-7-carbaguanine + guanosine(34) in tRNA = 7-aminomethyl-7-carbaguanosine(34) in tRNA + guanine. It functions in the pathway tRNA modification; tRNA-queuosine biosynthesis. In terms of biological role, catalyzes the base-exchange of a guanine (G) residue with the queuine precursor 7-aminomethyl-7-deazaguanine (PreQ1) at position 34 (anticodon wobble position) in tRNAs with GU(N) anticodons (tRNA-Asp, -Asn, -His and -Tyr). Catalysis occurs through a double-displacement mechanism. The nucleophile active site attacks the C1' of nucleotide 34 to detach the guanine base from the RNA, forming a covalent enzyme-RNA intermediate. The proton acceptor active site deprotonates the incoming PreQ1, allowing a nucleophilic attack on the C1' of the ribose to form the product. After dissociation, two additional enzymatic reactions on the tRNA convert PreQ1 to queuine (Q), resulting in the hypermodified nucleoside queuosine (7-(((4,5-cis-dihydroxy-2-cyclopenten-1-yl)amino)methyl)-7-deazaguanosine). The chain is Queuine tRNA-ribosyltransferase from Shouchella clausii (strain KSM-K16) (Alkalihalobacillus clausii).